The chain runs to 177 residues: Large ribosomal subunit protein uL6 (177 aa).

It belongs to the universal ribosomal protein uL6 family. In terms of assembly, part of the 50S ribosomal subunit.

This protein binds to the 23S rRNA, and is important in its secondary structure. It is located near the subunit interface in the base of the L7/L12 stalk, and near the tRNA binding site of the peptidyltransferase center. This is Large ribosomal subunit protein uL6 from Vibrio campbellii (strain ATCC BAA-1116).